A 342-amino-acid polypeptide reads, in one-letter code: 4-hydroxythreonine-4-phosphate dehydrogenase (342 aa).

Residues H139 and T140 each contribute to the substrate site. H174, H219, and H274 together coordinate a divalent metal cation. Substrate contacts are provided by K282, N291, and R300.

It belongs to the PdxA family. As to quaternary structure, homodimer. Requires Zn(2+) as cofactor. It depends on Mg(2+) as a cofactor. Co(2+) serves as cofactor.

It is found in the cytoplasm. The catalysed reaction is 4-(phosphooxy)-L-threonine + NAD(+) = 3-amino-2-oxopropyl phosphate + CO2 + NADH. It participates in cofactor biosynthesis; pyridoxine 5'-phosphate biosynthesis; pyridoxine 5'-phosphate from D-erythrose 4-phosphate: step 4/5. Catalyzes the NAD(P)-dependent oxidation of 4-(phosphooxy)-L-threonine (HTP) into 2-amino-3-oxo-4-(phosphooxy)butyric acid which spontaneously decarboxylates to form 3-amino-2-oxopropyl phosphate (AHAP). This is 4-hydroxythreonine-4-phosphate dehydrogenase from Mesorhizobium japonicum (strain LMG 29417 / CECT 9101 / MAFF 303099) (Mesorhizobium loti (strain MAFF 303099)).